The primary structure comprises 268 residues: Protein CONTINUOUS VASCULAR RING 1 (268 aa).

At 1–70 (MGDEKPVIVM…GWASKKFMTG (70 aa)) the chain is on the cytoplasmic side. The tract at residues 21–48 (IPVADSGDKDDGSSSKPSSSSSASSSSH) is disordered. Low complexity predominate over residues 34-48 (SSKPSSSSSASSSSH). The chain crosses the membrane as a helical span at residues 71-91 (CVILLPIAITFYITWWFIHFV). The Extracellular portion of the chain corresponds to 92-103 (DGFFSPIYAQLG). Residues 104–124 (INVFGFGFLTSIAFIFLVGVF) form a helical membrane-spanning segment. Residues 125 to 268 (MSSWLGASVL…LASIDRATSL (144 aa)) are Cytoplasmic-facing.

The protein belongs to the plant COV1 protein family. Mostly expressed in flowers and stems, and, to a lower extent, in roots and leaves.

Its subcellular location is the membrane. Functionally, involved in the regulation of vascular patterning in the stem, probably by negatively regulating the differentiation of vascular tissue. The sequence is that of Protein CONTINUOUS VASCULAR RING 1 from Arabidopsis thaliana (Mouse-ear cress).